A 306-amino-acid polypeptide reads, in one-letter code: Pantothenate kinase (306 aa).

Gly-91 to Ser-98 provides a ligand contact to ATP.

Belongs to the prokaryotic pantothenate kinase family.

It is found in the cytoplasm. The catalysed reaction is (R)-pantothenate + ATP = (R)-4'-phosphopantothenate + ADP + H(+). The protein operates within cofactor biosynthesis; coenzyme A biosynthesis; CoA from (R)-pantothenate: step 1/5. This is Pantothenate kinase from Streptococcus pyogenes serotype M49 (strain NZ131).